A 323-amino-acid chain; its full sequence is Acetyl esterase (323 aa).

Positions 91-93 (HGG) match the Involved in the stabilization of the negatively charged intermediate by the formation of the oxyanion hole motif. Active-site residues include Ser165, Asp262, and His292.

This sequence belongs to the 'GDXG' lipolytic enzyme family. As to quaternary structure, homodimer. Interacts with MalT and MelA.

It is found in the cytoplasm. Its function is as follows. Displays esterase activity towards short chain fatty esters (acyl chain length of up to 8 carbons). Able to hydrolyze triacetylglycerol (triacetin) and tributyrylglycerol (tributyrin), but not trioleylglycerol (triolein) or cholesterol oleate. Negatively regulates MalT activity by antagonizing maltotriose binding. Inhibits MelA galactosidase activity. In Salmonella paratyphi A (strain ATCC 9150 / SARB42), this protein is Acetyl esterase.